The sequence spans 329 residues: Apolipoprotein E (329 aa).

A signal peptide spans 1–18 (MKVLWAALVVALLAGCWA). Tandem repeats lie at residues 92–113 (TLME…EQLG), 114–135 (PMAS…ARLR), 136–157 (SDME…AMLG), 158–179 (QSTE…KRVL), 180–201 (RDAE…EGAE), 202–223 (RSVS…TRHA), 224–245 (KVDA…QQLR), and 246–267 (GRLE…EQME). Positions 92–267 (TLMEETMKEI…HLDEVREQME (176 aa)) are 8 X 22 AA approximate tandem repeats. Methionine sulfoxide is present on Met-155. The residue at position 159 (Ser-159) is a Phosphoserine. The interval 170–180 (HMRKLRKRVLR) is LDL and other lipoprotein receptors binding. 174–177 (LRKR) contributes to the heparin binding site. The interval 222–302 (HAKVDALATQ…GWFEPLVEDM (81 aa)) is lipid-binding and lipoprotein association. 241 to 248 (GQQLRGRL) contacts heparin. The segment at 278–329 (NQMRQQAEAFQARLKGWFEPLVEDMQRQWAVLVEKVQAAVGTSPTTPPVETK) is homooligomerization. Residues 290–302 (RLKGWFEPLVEDM) form a specificity for association with VLDL region.

It belongs to the apolipoprotein A1/A4/E family. As to quaternary structure, homotetramer. May interact with ABCA1; functionally associated with ABCA1 in the biogenesis of HDLs. May interact with APP/A4 amyloid-beta peptide; the interaction is extremely stable in vitro but its physiological significance is unclear. May interact with MAPT. May interact with MAP2. In the cerebrospinal fluid, interacts with secreted SORL1. Interacts with PMEL; this allows the loading of PMEL luminal fragment on ILVs to induce fibril nucleation. APOE exists as multiple glycosylated and sialylated glycoforms within cells and in plasma. The extent of glycosylation and sialylation are tissue and context specific. Post-translationally, glycated in plasma VLDL. In terms of processing, phosphorylated by FAM20C in the extracellular medium.

It localises to the secreted. The protein resides in the extracellular space. The protein localises to the extracellular matrix. Its subcellular location is the extracellular vesicle. It is found in the endosome. It localises to the multivesicular body. APOE is an apolipoprotein, a protein associating with lipid particles, that mainly functions in lipoprotein-mediated lipid transport between organs via the plasma and interstitial fluids. APOE is a core component of plasma lipoproteins and is involved in their production, conversion and clearance. Apolipoproteins are amphipathic molecules that interact both with lipids of the lipoprotein particle core and the aqueous environment of the plasma. As such, APOE associates with chylomicrons, chylomicron remnants, very low density lipoproteins (VLDL) and intermediate density lipoproteins (IDL) but shows a preferential binding to high-density lipoproteins (HDL). It also binds a wide range of cellular receptors including the LDL receptor/LDLR, the LDL receptor-related proteins LRP1, LRP2 and LRP8 and the very low-density lipoprotein receptor/VLDLR that mediate the cellular uptake of the APOE-containing lipoprotein particles. Finally, APOE also has a heparin-binding activity and binds heparan-sulfate proteoglycans on the surface of cells, a property that supports the capture and the receptor-mediated uptake of APOE-containing lipoproteins by cells. A main function of APOE is to mediate lipoprotein clearance through the uptake of chylomicrons, VLDLs, and HDLs by hepatocytes. APOE is also involved in the biosynthesis by the liver of VLDLs as well as their uptake by peripheral tissues ensuring the delivery of triglycerides and energy storage in muscle, heart and adipose tissues. By participating in the lipoprotein-mediated distribution of lipids among tissues, APOE plays a critical role in plasma and tissues lipid homeostasis. APOE is also involved in two steps of reverse cholesterol transport, the HDLs-mediated transport of cholesterol from peripheral tissues to the liver, and thereby plays an important role in cholesterol homeostasis. First, it is functionally associated with ABCA1 in the biogenesis of HDLs in tissues. Second, it is enriched in circulating HDLs and mediates their uptake by hepatocytes. APOE also plays an important role in lipid transport in the central nervous system, regulating neuron survival and sprouting. This chain is Apolipoprotein E (APOE), found in Eumetopias jubatus (Steller sea lion).